A 376-amino-acid polypeptide reads, in one-letter code: Transmembrane protein 43 homolog (376 aa).

Topologically, residues 1–10 (MASLSETLRS) are cytoplasmic. The chain crosses the membrane as a helical span at residues 11–31 (HWPIALFGVILFVAGGTELYW). Over 32 to 277 (NEGRAVHNMM…EVFRLEARAQ (246 aa)) the chain is Lumenal. Residues 278–298 (VLHTWWWRFVGWLLIFFGVTC) form a helical membrane-spanning segment. At 299–323 (NTKILRLLFVRVPLLVALAPDPQFP) the chain is on the cytoplasmic side. 2 consecutive transmembrane segments (helical) span residues 324–344 (VTGN…VAWI) and 345–365 (LHRP…YVWF). Residues 366–376 (TRNLVDYHRLD) lie on the Cytoplasmic side of the membrane.

Belongs to the TMEM43 family.

The protein localises to the endoplasmic reticulum membrane. It is found in the nucleus envelope. In terms of biological role, involved in lipid metabolism and utilization. This chain is Transmembrane protein 43 homolog, found in Drosophila melanogaster (Fruit fly).